The primary structure comprises 131 residues: Small ribosomal subunit protein uS11 (131 aa).

It belongs to the universal ribosomal protein uS11 family. In terms of assembly, part of the 30S ribosomal subunit. Interacts with proteins S7 and S18. Binds to IF-3.

In terms of biological role, located on the platform of the 30S subunit, it bridges several disparate RNA helices of the 16S rRNA. Forms part of the Shine-Dalgarno cleft in the 70S ribosome. The protein is Small ribosomal subunit protein uS11 of Neisseria gonorrhoeae (strain ATCC 700825 / FA 1090).